Consider the following 133-residue polypeptide: Large ribosomal subunit protein uL16c (133 aa).

It belongs to the universal ribosomal protein uL16 family. Part of the 50S ribosomal subunit.

The protein resides in the plastid. This chain is Large ribosomal subunit protein uL16c, found in Euglena longa (Euglenophycean alga).